The sequence spans 116 residues: Large ribosomal subunit protein eL31 (116 aa).

Belongs to the eukaryotic ribosomal protein eL31 family.

In Chlamydomonas reinhardtii (Chlamydomonas smithii), this protein is Large ribosomal subunit protein eL31 (RPL31).